Consider the following 365-residue polypeptide: Magnesium-chelatase subunit ChlI homolog (365 aa).

40 to 47 (EKGTAKST) contributes to the ATP binding site. The segment at 340–365 (FKQQNNKDNEEKEEHKDDDVKKNMMK) is disordered. Basic and acidic residues predominate over residues 344-365 (NNKDNEEKEEHKDDDVKKNMMK).

This sequence belongs to the Mg-chelatase subunits D/I family.

This chain is Magnesium-chelatase subunit ChlI homolog, found in Methanocaldococcus jannaschii (strain ATCC 43067 / DSM 2661 / JAL-1 / JCM 10045 / NBRC 100440) (Methanococcus jannaschii).